The sequence spans 37 residues: Large ribosomal subunit protein bL36 (37 aa).

The protein belongs to the bacterial ribosomal protein bL36 family.

In Geobacillus kaustophilus (strain HTA426), this protein is Large ribosomal subunit protein bL36.